A 359-amino-acid polypeptide reads, in one-letter code: Peptide chain release factor 1 (359 aa).

Glutamine 236 carries the post-translational modification N5-methylglutamine.

Belongs to the prokaryotic/mitochondrial release factor family. Methylated by PrmC. Methylation increases the termination efficiency of RF1.

It is found in the cytoplasm. In terms of biological role, peptide chain release factor 1 directs the termination of translation in response to the peptide chain termination codons UAG and UAA. This is Peptide chain release factor 1 from Streptococcus agalactiae serotype Ia (strain ATCC 27591 / A909 / CDC SS700).